We begin with the raw amino-acid sequence, 732 residues long: Acetophenone carboxylase gamma subunit (732 aa).

The protein belongs to the HyuA family. In terms of assembly, acetophenone carboxylase consists of five subunits; a heterooctameric subcomplex of two alpha (Apc1), two beta (Apc2), two gamma (Apc3) and two delta (Apc4) subunits assembles with the epsilon (Apc5) subunit in an unknown stoichiometry. Mg(2+) serves as cofactor. Requires Mn(2+) as cofactor.

It is found in the cytoplasm. It catalyses the reaction acetophenone + hydrogencarbonate + 2 ATP + H2O = 3-oxo-3-phenylpropanoate + 2 ADP + 2 phosphate + 2 H(+). Its activity is regulated as follows. Inhibited by zinc ions, carbamoylphosphate and beta,gamma-imido-ATP. Functionally, catalyzes the carboxylation of acetophenone to form 3-oxo-3-phenylpropanoate (benzoylacetate) in the anaerobic catabolism of ethylbenzene. Also carboxylates propiophenone at the same rate and 4-acetyl-pyridine at lower rates. The polypeptide is Acetophenone carboxylase gamma subunit (apc3) (Aromatoleum aromaticum (strain DSM 19018 / LMG 30748 / EbN1) (Azoarcus sp. (strain EbN1))).